Consider the following 94-residue polypeptide: Aspartyl/glutamyl-tRNA(Asn/Gln) amidotransferase subunit C (94 aa).

It belongs to the GatC family. As to quaternary structure, heterotrimer of A, B and C subunits.

It catalyses the reaction L-glutamyl-tRNA(Gln) + L-glutamine + ATP + H2O = L-glutaminyl-tRNA(Gln) + L-glutamate + ADP + phosphate + H(+). The catalysed reaction is L-aspartyl-tRNA(Asn) + L-glutamine + ATP + H2O = L-asparaginyl-tRNA(Asn) + L-glutamate + ADP + phosphate + 2 H(+). In terms of biological role, allows the formation of correctly charged Asn-tRNA(Asn) or Gln-tRNA(Gln) through the transamidation of misacylated Asp-tRNA(Asn) or Glu-tRNA(Gln) in organisms which lack either or both of asparaginyl-tRNA or glutaminyl-tRNA synthetases. The reaction takes place in the presence of glutamine and ATP through an activated phospho-Asp-tRNA(Asn) or phospho-Glu-tRNA(Gln). In Hydrogenobaculum sp. (strain Y04AAS1), this protein is Aspartyl/glutamyl-tRNA(Asn/Gln) amidotransferase subunit C.